The chain runs to 328 residues: DNA-directed RNA polymerase subunit alpha (328 aa).

Positions 1 to 231 are alpha N-terminal domain (alpha-NTD); it reads MQTNLLKPKA…EQLAVFAQLE (231 aa). Positions 248–328 are alpha C-terminal domain (alpha-CTD); it reads FDPILLRPVD…NWPPQGLDKR (81 aa).

It belongs to the RNA polymerase alpha chain family. In terms of assembly, homodimer. The RNAP catalytic core consists of 2 alpha, 1 beta, 1 beta' and 1 omega subunit. When a sigma factor is associated with the core the holoenzyme is formed, which can initiate transcription.

The catalysed reaction is RNA(n) + a ribonucleoside 5'-triphosphate = RNA(n+1) + diphosphate. Functionally, DNA-dependent RNA polymerase catalyzes the transcription of DNA into RNA using the four ribonucleoside triphosphates as substrates. This is DNA-directed RNA polymerase subunit alpha from Leptothrix cholodnii (strain ATCC 51168 / LMG 8142 / SP-6) (Leptothrix discophora (strain SP-6)).